A 524-amino-acid polypeptide reads, in one-letter code: Cytochrome P450 4F12 (524 aa).

2 helical membrane passes run 19-39 and 87-107; these read WLLL…AWTY and GFTV…PDTI. Position 468 (C468) interacts with heme.

This sequence belongs to the cytochrome P450 family. Requires heme as cofactor. Expressed in small intestine, liver, colon and heart.

The protein localises to the endoplasmic reticulum membrane. The protein resides in the microsome membrane. It carries out the reaction an organic molecule + reduced [NADPH--hemoprotein reductase] + O2 = an alcohol + oxidized [NADPH--hemoprotein reductase] + H2O + H(+). It catalyses the reaction (5Z,8Z,11Z,14Z)-eicosatetraenoate + reduced [NADPH--hemoprotein reductase] + O2 = 18-hydroxy-(5Z,8Z,11Z,14Z)-eicosatetraenoate + oxidized [NADPH--hemoprotein reductase] + H2O + H(+). The catalysed reaction is (7Z,10Z,13Z,16Z,19Z)-docosapentaenoate + reduced [NADPH--hemoprotein reductase] + O2 = 10,11-epoxy-(7Z,13Z,16Z,19Z)-docosatetraenoate + oxidized [NADPH--hemoprotein reductase] + H2O + H(+). The enzyme catalyses (7Z,10Z,13Z,16Z,19Z)-docosapentaenoate + reduced [NADPH--hemoprotein reductase] + O2 = 13,14-epoxy-(7Z,10Z,16Z,19Z)-docosatetraenoate + oxidized [NADPH--hemoprotein reductase] + H2O + H(+). It carries out the reaction (7Z,10Z,13Z,16Z,19Z)-docosapentaenoate + reduced [NADPH--hemoprotein reductase] + O2 = 16,17-epoxy-(7Z,10Z,13Z,19Z)-docosatetraenoate + oxidized [NADPH--hemoprotein reductase] + H2O + H(+). It catalyses the reaction (7Z,10Z,13Z,16Z,19Z)-docosapentaenoate + reduced [NADPH--hemoprotein reductase] + O2 = 19,20-epoxy-(7Z,10Z,13Z,16Z)-docosatetraenoate + oxidized [NADPH--hemoprotein reductase] + H2O + H(+). The catalysed reaction is (4Z,7Z,10Z,13Z,16Z,19Z)-docosahexaenoate + reduced [NADPH--hemoprotein reductase] + O2 = 10,11-epoxy-(4Z,7Z,13Z,16Z,19Z)-docosapentaenoate + oxidized [NADPH--hemoprotein reductase] + H2O + H(+). The enzyme catalyses (4Z,7Z,10Z,13Z,16Z,19Z)-docosahexaenoate + reduced [NADPH--hemoprotein reductase] + O2 = 13,14-epoxy-(4Z,7Z,10Z,16Z,19Z)-docosapentaenoate + oxidized [NADPH--hemoprotein reductase] + H2O + H(+). It carries out the reaction (4Z,7Z,10Z,13Z,16Z,19Z)-docosahexaenoate + reduced [NADPH--hemoprotein reductase] + O2 = 16,17-epoxy-(4Z,7Z,10Z,13Z,19Z)-docosapentaenoate + oxidized [NADPH--hemoprotein reductase] + H2O + H(+). It catalyses the reaction (4Z,7Z,10Z,13Z,16Z,19Z)-docosahexaenoate + reduced [NADPH--hemoprotein reductase] + O2 = 19,20-epoxy-(4Z,7Z,10Z,13Z,16Z)-docosapentaenoate + oxidized [NADPH--hemoprotein reductase] + H2O + H(+). Its pathway is lipid metabolism; arachidonate metabolism. Its function is as follows. A cytochrome P450 monooxygenase involved in the metabolism of endogenous polyunsaturated fatty acids (PUFAs). Mechanistically, uses molecular oxygen inserting one oxygen atom into a substrate, and reducing the second into a water molecule, with two electrons provided by NADPH via cytochrome P450 reductase (CPR; NADPH-ferrihemoprotein reductase). Catalyzes the hydroxylation of carbon hydrogen bonds, with preference for omega-2 position. Metabolizes (5Z,8Z,11Z,14Z)-eicosatetraenoic acid (arachidonate) toward 18-hydroxy arachidonate. Catalyzes the epoxidation of double bonds of PUFAs such as docosapentaenoic and docosahexaenoic acids. Has low omega-hydroxylase activity toward leukotriene B4 and arachidonate. Involved in the metabolism of xenobiotics. Catalyzes the hydroxylation of the antihistamine drug ebastine. The sequence is that of Cytochrome P450 4F12 from Homo sapiens (Human).